A 280-amino-acid chain; its full sequence is uncharacterized protein (280 aa).

6 helical membrane-spanning segments follow: residues 3-23 (ILITALEQSLIMLPLILGMYI), 52-72 (FGLFHALIFAIIAGGINGSIV), 81-101 (INGLIAGILANFMLYSVNLQI), 123-143 (NWLVPLILINSFIIVIVLILL), 196-216 (FADINMGYGVALVGIGAIIIG), and 233-253 (IFACFIGILFYFISLSILLHI).

Its subcellular location is the cell membrane. This is an uncharacterized protein from Rickettsia prowazekii (strain Madrid E).